We begin with the raw amino-acid sequence, 297 residues long: Phosphatidylserine decarboxylase proenzyme (297 aa).

Catalysis depends on charge relay system; for autoendoproteolytic cleavage activity residues Asp100, His157, and Ser263. Ser263 acts as the Schiff-base intermediate with substrate; via pyruvic acid; for decarboxylase activity in catalysis. The residue at position 263 (Ser263) is a Pyruvic acid (Ser); by autocatalysis.

It belongs to the phosphatidylserine decarboxylase family. PSD-B subfamily. Prokaryotic type I sub-subfamily. As to quaternary structure, heterodimer of a large membrane-associated beta subunit and a small pyruvoyl-containing alpha subunit. Pyruvate is required as a cofactor. In terms of processing, is synthesized initially as an inactive proenzyme. Formation of the active enzyme involves a self-maturation process in which the active site pyruvoyl group is generated from an internal serine residue via an autocatalytic post-translational modification. Two non-identical subunits are generated from the proenzyme in this reaction, and the pyruvate is formed at the N-terminus of the alpha chain, which is derived from the carboxyl end of the proenzyme. The autoendoproteolytic cleavage occurs by a canonical serine protease mechanism, in which the side chain hydroxyl group of the serine supplies its oxygen atom to form the C-terminus of the beta chain, while the remainder of the serine residue undergoes an oxidative deamination to produce ammonia and the pyruvoyl prosthetic group on the alpha chain. During this reaction, the Ser that is part of the protease active site of the proenzyme becomes the pyruvoyl prosthetic group, which constitutes an essential element of the active site of the mature decarboxylase.

The protein resides in the cell membrane. The catalysed reaction is a 1,2-diacyl-sn-glycero-3-phospho-L-serine + H(+) = a 1,2-diacyl-sn-glycero-3-phosphoethanolamine + CO2. The protein operates within phospholipid metabolism; phosphatidylethanolamine biosynthesis; phosphatidylethanolamine from CDP-diacylglycerol: step 2/2. Functionally, catalyzes the formation of phosphatidylethanolamine (PtdEtn) from phosphatidylserine (PtdSer). The sequence is that of Phosphatidylserine decarboxylase proenzyme from Actinobacillus pleuropneumoniae serotype 5b (strain L20).